Reading from the N-terminus, the 837-residue chain is Enterin neuropeptides (837 aa).

The first 25 residues, 1–25 (MAKHDVTVMTLLLVVCALHVFDAQG), serve as a signal peptide directing secretion. Residues 26–47 (TDVKLNDGFLRSGIMNIPFQRR) constitute a propeptide that is removed on maturation. At valine 57 the chain carries Valine amide. Residues 61-134 (SGFQSPVSPS…ENKRFSKENE (74 aa)) constitute a propeptide that is removed on maturation. Valine 146 carries the valine amide modification. Positions 150–178 (MDLSALEKELIAKLKAADLLSPLETEAPG) are excised as a propeptide. Leucine amide is present on leucine 190. A propeptide spanning residues 194 to 201 (MPVDVFPR) is cleaved from the precursor. Valine 211 is subject to Valine amide. A propeptide spanning residues 215 to 234 (SGNGENYFDDLDTFGDISQR) is cleaved from the precursor. At valine 244 the chain carries Valine amide. Positions 248 to 266 (GNTDFSRNPLARLSQVQNR) are excised as a propeptide. Position 276 is a valine amide (valine 276). Residues 280–285 (SVHNIV) constitute a propeptide that is removed on maturation. Valine 297 is subject to Valine amide. Residues 301–325 (DFEDASEGLDEEEGDIDGYSDDLDV) constitute a propeptide that is removed on maturation. Valine amide occurs at positions 336, 348, 360, 372, 384, 396, 408, 420, 432, 444, 456, 468, 480, 492, 504, 516, 528, and 540. A propeptide spanning residues 544-595 (ELGEDEINFLKEVDAADISRQLAEEDEKEAMVSVDDKETLSNEEDASEDDFE) is cleaved from the precursor. Residues 567–594 (EEDEKEAMVSVDDKETLSNEEDASEDDF) form a disordered region. Residues 584–593 (SNEEDASEDD) show a composition bias toward acidic residues. Glutamate 598 carries the pyrrolidone carboxylic acid (Glu); in form ENl' modification. Valine amide is present on valine 606. Positions 610 to 627 (DEEGDMGVEMEEEMESEK) are excised as a propeptide. Position 637 is a leucine amide (leucine 637). A Pyrrolidone carboxylic acid modification is found at glutamine 641. Position 649 is a valine amide (valine 649). Glutamine 653 carries the pyrrolidone carboxylic acid modification. Valine amide is present on residues valine 661 and valine 673. Position 677 is a pyrrolidone carboxylic acid (glutamine 677). 2 positions are modified to valine amide: valine 685 and valine 697. The residue at position 701 (glutamine 701) is a Pyrrolidone carboxylic acid. The residue at position 709 (valine 709) is a Valine amide. A Pyrrolidone carboxylic acid modification is found at glutamine 713. Valine 721 carries the valine amide modification. Glutamine 725 is subject to Pyrrolidone carboxylic acid. Valine 733 carries the valine amide modification. Residues 734 to 837 (GKRSGAEDID…DSHIMATSST (104 aa)) constitute a propeptide that is removed on maturation. The interval 772-837 (GQPAAANEEE…DSHIMATSST (66 aa)) is disordered. The segment covering 778 to 791 (NEEELQQEAAEESE) has biased composition (acidic residues).

As to expression, high expression in gut and CNS.

The protein resides in the secreted. Functionally, reduce interneurons B4/5 activity. May play a regulatory role in nonfeeding behaviors. The protein is Enterin neuropeptides (ENPP) of Aplysia californica (California sea hare).